The chain runs to 324 residues: MSAVLPSSASLYDRVRRVIPPIEWSVFVEDIDAILNLKRQRNAVILAHNYQTPEIFHCVADIVGDSLALARKAMTVDAEIIVLAGVHFMAETAKLLNPDKTVLIPDLGAGCSLAESITAEDVRLMRQRYPSVPVVTYVNTSAAVKAESDICCTSGNALAVVKSLGAPRVIMLPDEYLAKNIAAQTKVEIIAWKGRCEVHERFTAADIRELREAHPGISVLAHPECPPEVVAEADFAGSTAAMSDYVARHRPARVVLMTECSMSDNVAVEHPEVDFVRPCNLCPHMKRITLANIRTALEENRHVVTIDPHVAERARWAVERMLFV.

Residues His-48 and Ser-66 each coordinate iminosuccinate. Residue Cys-111 participates in [4Fe-4S] cluster binding. Iminosuccinate contacts are provided by residues 137–139 and Ser-154; that span reads YVN. Residue Cys-196 coordinates [4Fe-4S] cluster. Iminosuccinate-binding positions include 222–224 and Thr-239; that span reads HPE. Cys-282 is a [4Fe-4S] cluster binding site.

Belongs to the quinolinate synthase family. Type 2 subfamily. [4Fe-4S] cluster is required as a cofactor.

It localises to the cytoplasm. The enzyme catalyses iminosuccinate + dihydroxyacetone phosphate = quinolinate + phosphate + 2 H2O + H(+). The protein operates within cofactor biosynthesis; NAD(+) biosynthesis; quinolinate from iminoaspartate: step 1/1. Its function is as follows. Catalyzes the condensation of iminoaspartate with dihydroxyacetone phosphate to form quinolinate. This Mesorhizobium japonicum (strain LMG 29417 / CECT 9101 / MAFF 303099) (Mesorhizobium loti (strain MAFF 303099)) protein is Quinolinate synthase 1.